A 335-amino-acid chain; its full sequence is Avermitilol synthase (335 aa).

Mg(2+) contacts are provided by aspartate 80, aspartate 84, asparagine 219, serine 223, and glutamate 227. The DDXXD motif signature appears at 80 to 84 (DDQFD).

This sequence belongs to the terpene synthase family. It depends on Mg(2+) as a cofactor.

The enzyme catalyses (2E,6E)-farnesyl diphosphate + H2O = avermitilol + diphosphate. In terms of biological role, catalyzes the cyclization of farnesyl diphosphate to avermitilol. The sequence is that of Avermitilol synthase (tpc1) from Streptomyces avermitilis (strain ATCC 31267 / DSM 46492 / JCM 5070 / NBRC 14893 / NCIMB 12804 / NRRL 8165 / MA-4680).